We begin with the raw amino-acid sequence, 188 residues long: ATP synthase subunit b 2 (188 aa).

The interval 1–23 (MAEGHGDANGATAHTAADGGHKA) is disordered. The span at 8–18 (ANGATAHTAAD) shows a compositional bias: low complexity. The helical transmembrane segment at 37-57 (LVSLLIAFVALYLIVSKIALP) threads the bilayer.

This sequence belongs to the ATPase B chain family. As to quaternary structure, F-type ATPases have 2 components, F(1) - the catalytic core - and F(0) - the membrane proton channel. F(1) has five subunits: alpha(3), beta(3), gamma(1), delta(1), epsilon(1). F(0) has three main subunits: a(1), b(2) and c(10-14). The alpha and beta chains form an alternating ring which encloses part of the gamma chain. F(1) is attached to F(0) by a central stalk formed by the gamma and epsilon chains, while a peripheral stalk is formed by the delta and b chains.

It is found in the cell inner membrane. Its function is as follows. F(1)F(0) ATP synthase produces ATP from ADP in the presence of a proton or sodium gradient. F-type ATPases consist of two structural domains, F(1) containing the extramembraneous catalytic core and F(0) containing the membrane proton channel, linked together by a central stalk and a peripheral stalk. During catalysis, ATP synthesis in the catalytic domain of F(1) is coupled via a rotary mechanism of the central stalk subunits to proton translocation. Component of the F(0) channel, it forms part of the peripheral stalk, linking F(1) to F(0). The b'-subunit is a diverged and duplicated form of b found in plants and photosynthetic bacteria. This is ATP synthase subunit b 2 (atpF2) from Rhodopseudomonas palustris (strain BisB18).